The chain runs to 420 residues: Glycogen synthase kinase-3 beta (420 aa).

The segment covering 1–22 has biased composition (polar residues); the sequence is MSGRPRTTSFAESCKPVQQPSA. The interval 1–35 is disordered; it reads MSGRPRTTSFAESCKPVQQPSAFGSMKVSRDKDGS. Ser9 carries the post-translational modification Phosphoserine; by PKB/AKT1, RPS6KA3 and SGK3. The S-palmitoyl cysteine moiety is linked to residue Cys14. Residues 56–340 enclose the Protein kinase domain; the sequence is YTDTKVIGNG…PLEACAHSFF (285 aa). Residues 62–70 and Lys85 contribute to the ATP site; that span reads IGNGSFGVV. Residue Asp181 is the Proton acceptor of the active site. Phosphotyrosine is present on Tyr216. 2 stretches are compositionally biased toward low complexity: residues 387–401 and 409–420; these read AAST…SDAN and NNAAFASASNST. The disordered stretch occupies residues 387–420; that stretch reads AASTPTNATAASDANAGDRGQTNNAAFASASNST. Ser389 carries the phosphoserine modification. The residue at position 390 (Thr390) is a Phosphothreonine.

Belongs to the protein kinase superfamily. CMGC Ser/Thr protein kinase family. GSK-3 subfamily. As to quaternary structure, monomer. Interacts with DAB2IP (via C2 domain); the interaction stimulates GSK3B kinase activation. Interacts (via C2 domain) with PPP2CA. Interacts with ARRB2, AXIN1, CABYR, DISC1, MMP2, MUC1, NIN, PRUNE1 and ZBED3. Interacts with AXIN1; the interaction mediates hyperphosphorylation of CTNNB1 leading to its ubiquitination and destruction. Interacts with and phosphorylates SNAI1. Interacts with DNM1L (via a C-terminal domain). Found in a complex composed of MACF1, APC, AXIN1, CTNNB1 and GSK3B. Interacts with SGK3. Interacts with the CLOCK-BMAL1 heterodimer. Interacts with the BMAL1. Interacts with CTNND2. The complex composed, at least, of APC, CTNNB1 and GSK3B interacts with JPT1; the interaction requires the inactive form of GSK3B (phosphorylated at 'Ser-9'). Forms a complex composed of PRKAR2A or PRKAR2B, GSK3B and GSKIP through GSKIP interaction; facilitates PKA-induced phosphorylation and regulates GSK3B activity. Interacts with GSKIP. Interacts with GID8. Interacts with PIWIL2. Interacts with LMBR1L. Interacts with DDX3X. Interacts with BIRC2. Interacts with TNFRSF10B; TNFRSF10B stimulation inhibits GSK3B kinase activity. Found in a complex with SLC39A6, SLC39A10 and with GSK3B that controls NCAM1 phosphorylation. Interacts with PKP3 (via ARM repeats); the interaction may be involved in PKP3 protein degradation. Phosphorylated by AKT1 and ILK1. Upon insulin-mediated signaling, the activated PKB/AKT1 and RPS6KA3 protein kinases phosphorylate and deactivate GSK3B, resulting in the dephosphorylation and activation of GYS1. Activated by phosphorylation at Tyr-216. Inactivated by phosphorylation at Ser-9. Post-translationally, mono-ADP-ribosylation by PARP10 negatively regulates kinase activity. In terms of processing, palmitoylated. Palmitoylation by ZDHHC4 prevents AKT1-mediated phosphorylation.

The protein localises to the cytoplasm. It localises to the nucleus. It is found in the cell membrane. The catalysed reaction is L-seryl-[tau protein] + ATP = O-phospho-L-seryl-[tau protein] + ADP + H(+). It carries out the reaction L-threonyl-[tau protein] + ATP = O-phospho-L-threonyl-[tau protein] + ADP + H(+). The enzyme catalyses L-seryl-[protein] + ATP = O-phospho-L-seryl-[protein] + ADP + H(+). It catalyses the reaction L-threonyl-[protein] + ATP = O-phospho-L-threonyl-[protein] + ADP + H(+). Its activity is regulated as follows. Activated by phosphorylation at Tyr-216. In response to insulin, inhibited by phosphorylation at Ser-9 by PKB/AKT1; phosphorylation at this site causes a conformational change, preventing access of substrates to the active site. Inhibited by IL22 treatment which also triggers phosphorylation at Ser-9, promoting inactivation. Inhibited by lithium. Constitutively active protein kinase that acts as a negative regulator in the hormonal control of glucose homeostasis, Wnt signaling and regulation of transcription factors and microtubules, by phosphorylating and inactivating glycogen synthase (GYS1 or GYS2), EIF2B, CTNNB1/beta-catenin, APC, AXIN1, DPYSL2/CRMP2, JUN, NFATC1/NFATC, MAPT/TAU and MACF1. Requires primed phosphorylation of the majority of its substrates. In skeletal muscle, contributes to insulin regulation of glycogen synthesis by phosphorylating and inhibiting GYS1 activity and hence glycogen synthesis. May also mediate the development of insulin resistance by regulating activation of transcription factors. Regulates protein synthesis by controlling the activity of initiation factor 2B (EIF2BE/EIF2B5) in the same manner as glycogen synthase. In Wnt signaling, GSK3B forms a multimeric complex with APC, AXIN1 and CTNNB1/beta-catenin and phosphorylates the N-terminus of CTNNB1 leading to its degradation mediated by ubiquitin/proteasomes. Phosphorylates JUN at sites proximal to its DNA-binding domain, thereby reducing its affinity for DNA. Phosphorylates NFATC1/NFATC on conserved serine residues promoting NFATC1/NFATC nuclear export, shutting off NFATC1/NFATC gene regulation, and thereby opposing the action of calcineurin. Phosphorylates MAPT/TAU on 'Thr-548', decreasing significantly MAPT/TAU ability to bind and stabilize microtubules. MAPT/TAU is the principal component of neurofibrillary tangles in Alzheimer disease. Plays an important role in ERBB2-dependent stabilization of microtubules at the cell cortex. Phosphorylates MACF1, inhibiting its binding to microtubules which is critical for its role in bulge stem cell migration and skin wound repair. Probably regulates NF-kappa-B (NFKB1) at the transcriptional level and is required for the NF-kappa-B-mediated anti-apoptotic response to TNF-alpha (TNF/TNFA). Negatively regulates replication in pancreatic beta-cells, resulting in apoptosis, loss of beta-cells and diabetes. Through phosphorylation of the anti-apoptotic protein MCL1, may control cell apoptosis in response to growth factors deprivation. Phosphorylates MUC1 in breast cancer cells, decreasing the interaction of MUC1 with CTNNB1/beta-catenin. Is necessary for the establishment of neuronal polarity and axon outgrowth. Phosphorylates MARK2, leading to inhibition of its activity. Phosphorylates SIK1 at 'Thr-182', leading to sustainment of its activity. Phosphorylates ZC3HAV1 which enhances its antiviral activity. Phosphorylates SNAI1, leading to its ubiquitination and proteasomal degradation. Phosphorylates SFPQ at 'Thr-687' upon T-cell activation. Phosphorylates NR1D1 st 'Ser-55' and 'Ser-59' and stabilizes it by protecting it from proteasomal degradation. Regulates the circadian clock via phosphorylation of the major clock components including BMAL1, CLOCK and PER2. Phosphorylates CLOCK AT 'Ser-427' and targets it for proteasomal degradation. Phosphorylates BMAL1 at 'Ser-17' and 'Ser-21' and primes it for ubiquitination and proteasomal degradation. Phosphorylates FBXL2 at 'Thr-404' and primes it for ubiquitination by the SCF(FBXO3) complex and proteasomal degradation. Phosphorylates OGT at 'Ser-3' or 'Ser-4' which positively regulates its activity. Phosphorylates MYCN in neuroblastoma cells which may promote its degradation. Regulates the circadian rhythmicity of hippocampal long-term potentiation and BMAL1 and PER2 expression. Acts as a regulator of autophagy by mediating phosphorylation of KAT5/TIP60 under starvation conditions, activating KAT5/TIP60 acetyltransferase activity and promoting acetylation of key autophagy regulators, such as ULK1 and RUBCNL/Pacer. Negatively regulates extrinsic apoptotic signaling pathway via death domain receptors. Promotes the formation of an anti-apoptotic complex, made of DDX3X, BRIC2 and GSK3B, at death receptors, including TNFRSF10B. The anti-apoptotic function is most effective with weak apoptotic signals and can be overcome by stronger stimulation. Phosphorylates E2F1, promoting the interaction between E2F1 and USP11, stabilizing E2F1 and promoting its activity. Phosphorylates mTORC2 complex component RICTOR at 'Ser-1235' in response to endoplasmic stress, inhibiting mTORC2. Phosphorylates FXR1, promoting FXR1 ubiquitination by the SCF(FBXO4) complex and FXR1 degradation by the proteasome. Phosphorylates interleukin-22 receptor subunit IL22RA1, preventing its proteasomal degradation. This is Glycogen synthase kinase-3 beta from Spermophilus citellus (European ground squirrel).